The primary structure comprises 877 residues: GPI inositol-deacylase (877 aa).

A helical transmembrane segment spans residues 35-55 (FLSRLFCALAVLFSYSIYQSF). Ser206 is a catalytic residue. N-linked (GlcNAc...) asparagine glycosylation is found at Asn291, Asn336, Asn374, Asn448, and Asn473. A run of 8 helical transmembrane segments spans residues 597-617 (VLAW…SDFI), 637-657 (MPIC…LPDF), 674-694 (PLVG…SFVI), 735-755 (VLVN…ILLW), 771-791 (ISTC…HVAI), 809-829 (NFYY…GGTI), 834-854 (VCLK…FSVG), and 857-877 (WTWI…ASII).

Belongs to the GPI inositol-deacylase family.

The protein resides in the endoplasmic reticulum membrane. In terms of biological role, involved in inositol deacylation of GPI-anchored proteins which plays important roles in the quality control and ER-associated degradation of GPI-anchored proteins. The protein is GPI inositol-deacylase (BST1) of Cryptococcus neoformans var. neoformans serotype D (strain JEC21 / ATCC MYA-565) (Filobasidiella neoformans).